The sequence spans 49 residues: Osteocalcin (49 aa).

A Gla domain is found at 1 to 47 (YLDSGLGAPVPYPDPLEPKREVCELNPNCDELADHIGFQEAYQRFYG). Ca(2+) is bound by residues glutamate 17, glutamate 21, glutamate 24, and aspartate 30. Glutamate 17, glutamate 21, and glutamate 24 each carry 4-carboxyglutamate. Cysteines 23 and 29 form a disulfide.

It belongs to the osteocalcin/matrix Gla protein family. In terms of processing, gamma-carboxyglutamate residues are formed by vitamin K dependent carboxylation by GGCX. These residues are essential for the binding of calcium. Decarboxylation promotes the hormone activity.

The protein localises to the secreted. Functionally, the carboxylated form is one of the main organic components of the bone matrix, which constitutes 1-2% of the total bone protein. It acts as a negative regulator of bone formation and is required to limit bone formation without impairing bone resorption or mineralization. The carboxylated form binds strongly to apatite and calcium. In terms of biological role, the uncarboxylated form acts as a hormone secreted by osteoblasts, which regulates different cellular processes, such as energy metabolism, male fertility and brain development. Regulates of energy metabolism by acting as a hormone favoring pancreatic beta-cell proliferation, insulin secretion and sensitivity and energy expenditure. Uncarboxylated osteocalcin hormone also promotes testosterone production in the testes: acts as a ligand for G protein-coupled receptor GPRC6A at the surface of Leydig cells, initiating a signaling response that promotes the expression of enzymes required for testosterone synthesis in a CREB-dependent manner. Also acts as a regulator of brain development: osteocalcin hormone crosses the blood-brain barrier and acts as a ligand for GPR158 on neurons, initiating a signaling response that prevents neuronal apoptosis in the hippocampus, favors the synthesis of all monoamine neurotransmitters and inhibits that of gamma-aminobutyric acid (GABA). Osteocalcin also crosses the placenta during pregnancy and maternal osteocalcin is required for fetal brain development. The chain is Osteocalcin (BGLAP) from Canis lupus familiaris (Dog).